The chain runs to 618 residues: Camphene synthase, chloroplastic (618 aa).

The N-terminal 51 residues, 1–51, are a transit peptide targeting the chloroplast; that stretch reads MALLSITPLVSRSCLSSSHEIKALRRTIPTLGICRPGKSVAHSINMCLTSV. Mg(2+)-binding residues include aspartate 369, aspartate 373, and aspartate 521. The DDXXD motif signature appears at 369-373; that stretch reads DDMYD.

Belongs to the terpene synthase family. Tpsd subfamily. Requires Mg(2+) as cofactor. Mn(2+) is required as a cofactor. It depends on K(+) as a cofactor.

The protein localises to the plastid. It is found in the chloroplast. The catalysed reaction is (2E)-geranyl diphosphate = (1S,4R)-camphene + diphosphate. It participates in terpene metabolism; oleoresin biosynthesis. Its function is as follows. Involved in defensive oleoresin formation in conifers in response to insect attack or other injury. Involved in monoterpene (C10) olefins biosynthesis. This is Camphene synthase, chloroplastic (ag6) from Abies grandis (Grand fir).